Here is a 157-residue protein sequence, read N- to C-terminus: uncharacterized protein (157 aa).

Belongs to the mimivirus L242/L243 family.

This is an uncharacterized protein from Acanthamoeba polyphaga (Amoeba).